Here is a 184-residue protein sequence, read N- to C-terminus: Peptide deformylase (184 aa).

Residues C98 and H140 each contribute to the Fe cation site. E141 is a catalytic residue. Residue H144 coordinates Fe cation.

Belongs to the polypeptide deformylase family. Requires Fe(2+) as cofactor.

The enzyme catalyses N-terminal N-formyl-L-methionyl-[peptide] + H2O = N-terminal L-methionyl-[peptide] + formate. Its function is as follows. Removes the formyl group from the N-terminal Met of newly synthesized proteins. Requires at least a dipeptide for an efficient rate of reaction. N-terminal L-methionine is a prerequisite for activity but the enzyme has broad specificity at other positions. The sequence is that of Peptide deformylase from Phocaeicola vulgatus (strain ATCC 8482 / DSM 1447 / JCM 5826 / CCUG 4940 / NBRC 14291 / NCTC 11154) (Bacteroides vulgatus).